Reading from the N-terminus, the 100-residue chain is Small ribosomal subunit protein uS14c (100 aa).

This sequence belongs to the universal ribosomal protein uS14 family. As to quaternary structure, part of the 30S ribosomal subunit.

It localises to the plastid. Its subcellular location is the chloroplast. Binds 16S rRNA, required for the assembly of 30S particles. In Populus alba (White poplar), this protein is Small ribosomal subunit protein uS14c.